The chain runs to 68 residues: Beta-defensin 1 (68 aa).

The N-terminal stretch at 1-21 is a signal peptide; sequence MRTSYLLLFTLCLLMSEMASG. The propeptide occupies 22-32; the sequence is DNFLTGLGHRS. 3 cysteine pairs are disulfide-bonded: C37/C66, C44/C59, and C49/C67.

It belongs to the beta-defensin family. In terms of assembly, monomer. Homodimer.

The protein localises to the secreted. The protein resides in the membrane. Its function is as follows. Has bactericidal activity. May act as a ligand for C-C chemokine receptor CCR6. Positively regulates the sperm motility and bactericidal activity in a CCR6-dependent manner. Binds to CCR6 and triggers Ca2+ mobilization in the sperm which is important for its motility. The polypeptide is Beta-defensin 1 (DEFB1) (Presbytis melalophos (Mitred leaf monkey)).